A 232-amino-acid polypeptide reads, in one-letter code: 7-cyano-7-deazaguanine synthase 2 (232 aa).

9–19 (FSGGQDSTTCL) serves as a coordination point for ATP. Cys-189, Cys-198, Cys-201, and Cys-204 together coordinate Zn(2+).

The protein belongs to the QueC family. Zn(2+) is required as a cofactor.

The catalysed reaction is 7-carboxy-7-deazaguanine + NH4(+) + ATP = 7-cyano-7-deazaguanine + ADP + phosphate + H2O + H(+). It functions in the pathway purine metabolism; 7-cyano-7-deazaguanine biosynthesis. Its function is as follows. Catalyzes the ATP-dependent conversion of 7-carboxy-7-deazaguanine (CDG) to 7-cyano-7-deazaguanine (preQ(0)). In Pseudomonas fluorescens (strain ATCC BAA-477 / NRRL B-23932 / Pf-5), this protein is 7-cyano-7-deazaguanine synthase 2.